Reading from the N-terminus, the 292-residue chain is Pyridoxal 5'-phosphate synthase subunit PdxS (292 aa).

Residue aspartate 22 coordinates D-ribose 5-phosphate. The Schiff-base intermediate with D-ribose 5-phosphate role is filled by lysine 79. Glycine 151 is a D-ribose 5-phosphate binding site. Arginine 163 serves as a coordination point for D-glyceraldehyde 3-phosphate. Residues glycine 212 and 233-234 (GS) each bind D-ribose 5-phosphate.

This sequence belongs to the PdxS/SNZ family. In the presence of PdxT, forms a dodecamer of heterodimers.

The enzyme catalyses aldehydo-D-ribose 5-phosphate + D-glyceraldehyde 3-phosphate + L-glutamine = pyridoxal 5'-phosphate + L-glutamate + phosphate + 3 H2O + H(+). The protein operates within cofactor biosynthesis; pyridoxal 5'-phosphate biosynthesis. Catalyzes the formation of pyridoxal 5'-phosphate from ribose 5-phosphate (RBP), glyceraldehyde 3-phosphate (G3P) and ammonia. The ammonia is provided by the PdxT subunit. Can also use ribulose 5-phosphate and dihydroxyacetone phosphate as substrates, resulting from enzyme-catalyzed isomerization of RBP and G3P, respectively. This chain is Pyridoxal 5'-phosphate synthase subunit PdxS, found in Thermoanaerobacter sp. (strain X514).